A 318-amino-acid polypeptide reads, in one-letter code: Cytochrome c biogenesis protein CcsA (318 aa).

Transmembrane regions (helical) follow at residues 17 to 37 (VLALGLAAFALLLLAIPISFW), 45 to 65 (SAVVTLLVALANLVLTAQLVL), 75 to 95 (ISNLYESLCFLAWACTLAQLL), 104 to 124 (IVSAAATPMALLCVAFASFAL), 149 to 169 (VIMCSYAALLVGSFLSMAVLF), 224 to 244 (TITVGFLLLTLGLISGAVWAN), 258 to 275 (TWALICWMVYAAYLHTRF), and 287 to 307 (VAVAGIVVIVVCYIGVNLLGI).

This sequence belongs to the CcmF/CycK/Ccl1/NrfE/CcsA family. In terms of assembly, may interact with ccs1.

The protein localises to the cellular thylakoid membrane. In terms of biological role, required during biogenesis of c-type cytochromes (cytochrome c6 and cytochrome f) at the step of heme attachment. The polypeptide is Cytochrome c biogenesis protein CcsA (Prochlorococcus marinus (strain MIT 9303)).